Here is a 309-residue protein sequence, read N- to C-terminus: Olfactory receptor-like protein OLF4 (309 aa).

Over 1-25 the chain is Extracellular; sequence MELENDTRIPEFLLLGFSEEPKLQP. N-linked (GlcNAc...) asparagine glycosylation is present at Asn5. The helical transmembrane segment at 26-49 threads the bilayer; that stretch reads FLFGLFLSMYLVTILGNLLLILAV. Topologically, residues 50–57 are cytoplasmic; it reads SSDSHLHT. The chain crosses the membrane as a helical span at residues 58–79; that stretch reads PMYFFLANLSFVDICFTCTTIP. The Extracellular segment spans residues 80 to 100; sequence KMLVNIQTQRKVITYESCIIQ. The chain crosses the membrane as a helical span at residues 101-120; the sequence is MYFFELFAGIDNFLLTVMAY. Residues 121–139 are Cytoplasmic-facing; it reads DRYMAICYPLHYMVIMNPQ. Residues 140–158 form a helical membrane-spanning segment; sequence LCSLLLLVSWIMSALHSLL. The Extracellular portion of the chain corresponds to 159 to 196; it reads QTLMVLRLSFCTHFQIPHFFCELNQMIQLACSDTFLNN. The chain crosses the membrane as a helical span at residues 197–219; sequence MMLYFAAILLGVAPLVGVLYSYF. Topologically, residues 220–236 are cytoplasmic; the sequence is KIVSSIRGISSAHSKYK. Residues 237-260 traverse the membrane as a helical segment; sequence AFSTCASHLSVVSLFYCTSLGVYL. The Extracellular portion of the chain corresponds to 261–272; the sequence is SSAAPQSTHTSS. Residues 273–292 traverse the membrane as a helical segment; the sequence is VASVMYTVVTPMLNPFIYSL. At 293–309 the chain is on the cytoplasmic side; it reads RNKDIKGALNVFFRGKP.

Belongs to the G-protein coupled receptor 1 family.

It is found in the cell membrane. Its function is as follows. Putative odorant or sperm cell receptor. The chain is Olfactory receptor-like protein OLF4 from Canis lupus familiaris (Dog).